An 830-amino-acid chain; its full sequence is BLOC-2 complex member HPS5 homolog (830 aa).

3 WD repeats span residues 25 to 64 (RNNS…FLAI), 67 to 106 (SQLG…STDG), and 114 to 153 (GGPA…GRNI). A coiled-coil region spans residues 578–604 (DTETIVRLLRKLETLMEENEEPNARLK).

It belongs to the HPS5 family.

Has a role in the biogenesis of eye pigment granules. Eye pigment granules are specialized forms of late endosomes or lysosomes. Biogenesis of pigment granules in the eye requires molecular components required for protein delivery to lysosomes. The sequence is that of BLOC-2 complex member HPS5 homolog from Anopheles gambiae (African malaria mosquito).